The primary structure comprises 225 residues: Fibronectin type III domain-containing protein (225 aa).

Residues 1 to 17 form the signal peptide; the sequence is MFSFGIILLTVVSFTNA. Residues 106–206 form the Fibronectin type-III domain; the sequence is PPTNVIVEST…MPLNVKTPDI (101 aa).

As to expression, component of the organic matrix of calcified shell layers like nacre and prisms.

The protein resides in the secreted. In Mytilus californianus (California mussel), this protein is Fibronectin type III domain-containing protein.